Consider the following 327-residue polypeptide: Ribosomal RNA large subunit methyltransferase F (327 aa).

Positions 1 to 24 (MPRKTSSQPRPAEPKAVLHPRNRH) are disordered.

This sequence belongs to the methyltransferase superfamily. METTL16/RlmF family.

The protein resides in the cytoplasm. It carries out the reaction adenosine(1618) in 23S rRNA + S-adenosyl-L-methionine = N(6)-methyladenosine(1618) in 23S rRNA + S-adenosyl-L-homocysteine + H(+). Its function is as follows. Specifically methylates the adenine in position 1618 of 23S rRNA. This is Ribosomal RNA large subunit methyltransferase F from Stutzerimonas stutzeri (strain A1501) (Pseudomonas stutzeri).